A 355-amino-acid chain; its full sequence is Probable nitronate monooxygenase (355 aa).

Residues N71, Q175, G180, G218, and 237–240 (QMGT) contribute to the FMN site.

The protein belongs to the nitronate monooxygenase family. NMO class I subfamily. FMN is required as a cofactor.

The enzyme catalyses 3 propionate 3-nitronate + 3 O2 + H2O = 3 3-oxopropanoate + 2 nitrate + nitrite + H2O2 + 3 H(+). Its function is as follows. Nitronate monooxygenase that uses molecular oxygen to catalyze the oxidative denitrification of alkyl nitronates. Acts on propionate 3-nitronate (P3N), the presumed physiological substrate. Probably functions in the detoxification of P3N, a metabolic poison produced by plants and fungi as a defense mechanism. The chain is Probable nitronate monooxygenase from Staphylococcus aureus (strain MSSA476).